The primary structure comprises 739 residues: Nucleoprotein (739 aa).

Positions 1–25 (MDSRPQKIWMAPSLTESDMDYHKIL) are oligomerization, N-terminal arm. Residues 26–405 (TAGLSVQQGI…TLRKERLAKL (380 aa)) are NP core. The interval 415-647 (PKTSGHYDDD…DSDNTQSEHS (233 aa)) is disordered. Low complexity-rich tracts occupy residues 449–458 (SQDTTIPDVV) and 504–514 (KGGQQKNSQKG). The short motif at 562 to 567 (LTPINE) is the Host PPP2R5C-binding motif element. The segment covering 567 to 579 (EEADPLDDADDET) has biased composition (acidic residues). The VP30-binding motif signature appears at 606-611 (PPAPVY). Basic and acidic residues predominate over residues 611–638 (YRDHSEKKELPQDEQQDQDHTQEARNQD).

It belongs to the filoviruses nucleoprotein family. As to quaternary structure, homooligomer. Homomultimerizes to form the nucleocapsid. Binds to viral genomic RNA. Interacts with VP35 and VP30 to form the nucleocapsid. Interacts with host PPP2R5C; this interaction leads to VP30 dephosphorylation and viral transcription. Interacts with VP24; this interaction facilitates nucleocapsid assembly and genome packaging. Interacts with matrix protein VP40; this interaction allows recruitment of the nucleocapsid into progeny virions. Interacts with host STAU1. Interacts with host NXF1 (via RNA-binding domain); this interaction recruits NXF1 to the inclusion bodies were viral replication takes place, probably to export viral mRNA-NXF1 complexes from these sites. Interacts with host CCDC92; this interaction sequesters NP in the host cytoplasm. Interacts with host TRIM14. Phosphorylated by host. Post-translationally, O-glycosylated by host. In terms of processing, acetylated by host EP300 in vitro.

The protein resides in the virion. It is found in the host cytoplasm. Its function is as follows. Oligomerizes into helical capsid to encapsidate the viral genome, protecting it from nucleases and the cellular innate immune response. VP35 binds to and stabilizes monomeric NP, keeping it soluble. Upon virus replication, NP is recruited to bind cooperatively viral genomic RNA and VP35 is released. The encapsidated genomic RNA is termed the nucleocapsid and serves as template for transcription and replication. The nucleocapsid is helical with a pitch of 10.81 NP per turn and a diameter of about 22nm. Each NP binds to six nucleotides of viral genomic RNA, three being exposed to the solvant and three hidden into the nucleocapsid. Also recruits host PPP2R5C phosphatase to dephosphorylate VP30 and thereby promote viral transcription. Upon virion assembly and budding, NP binds to VP24 and possibly host STAU1. This chain is Nucleoprotein (NP), found in Epomops franqueti (Franquet's epauletted fruit bat).